Consider the following 148-residue polypeptide: Arginine repressor (148 aa).

Belongs to the ArgR family.

Its subcellular location is the cytoplasm. The protein operates within amino-acid biosynthesis; L-arginine biosynthesis [regulation]. Regulates arginine biosynthesis genes. This is Arginine repressor from Chlorobium phaeovibrioides (strain DSM 265 / 1930) (Prosthecochloris vibrioformis (strain DSM 265)).